Consider the following 129-residue polypeptide: Small ribosomal subunit protein uS11 (129 aa).

It belongs to the universal ribosomal protein uS11 family. As to quaternary structure, part of the 30S ribosomal subunit. Interacts with proteins S7 and S18. Binds to IF-3.

Its function is as follows. Located on the platform of the 30S subunit, it bridges several disparate RNA helices of the 16S rRNA. Forms part of the Shine-Dalgarno cleft in the 70S ribosome. This is Small ribosomal subunit protein uS11 from Phocaeicola vulgatus (strain ATCC 8482 / DSM 1447 / JCM 5826 / CCUG 4940 / NBRC 14291 / NCTC 11154) (Bacteroides vulgatus).